We begin with the raw amino-acid sequence, 877 residues long: Alanine--tRNA ligase (877 aa).

Residues His-563, His-567, Cys-665, and His-669 each contribute to the Zn(2+) site.

This sequence belongs to the class-II aminoacyl-tRNA synthetase family. Zn(2+) serves as cofactor.

Its subcellular location is the cytoplasm. It catalyses the reaction tRNA(Ala) + L-alanine + ATP = L-alanyl-tRNA(Ala) + AMP + diphosphate. Its function is as follows. Catalyzes the attachment of alanine to tRNA(Ala) in a two-step reaction: alanine is first activated by ATP to form Ala-AMP and then transferred to the acceptor end of tRNA(Ala). Also edits incorrectly charged Ser-tRNA(Ala) and Gly-tRNA(Ala) via its editing domain. The polypeptide is Alanine--tRNA ligase (Thermoanaerobacter pseudethanolicus (strain ATCC 33223 / 39E) (Clostridium thermohydrosulfuricum)).